Reading from the N-terminus, the 313-residue chain is Aspartate carbamoyltransferase catalytic subunit (313 aa).

Residues Arg66 and Thr67 each contribute to the carbamoyl phosphate site. Lys94 is an L-aspartate binding site. Positions 116, 144, and 147 each coordinate carbamoyl phosphate. L-aspartate contacts are provided by Arg177 and Arg231. The carbamoyl phosphate site is built by Gly272 and Pro273.

Belongs to the aspartate/ornithine carbamoyltransferase superfamily. ATCase family. Heterododecamer (2C3:3R2) of six catalytic PyrB chains organized as two trimers (C3), and six regulatory PyrI chains organized as three dimers (R2).

The enzyme catalyses carbamoyl phosphate + L-aspartate = N-carbamoyl-L-aspartate + phosphate + H(+). It functions in the pathway pyrimidine metabolism; UMP biosynthesis via de novo pathway; (S)-dihydroorotate from bicarbonate: step 2/3. Its function is as follows. Catalyzes the condensation of carbamoyl phosphate and aspartate to form carbamoyl aspartate and inorganic phosphate, the committed step in the de novo pyrimidine nucleotide biosynthesis pathway. This Pelagibacter ubique (strain HTCC1062) protein is Aspartate carbamoyltransferase catalytic subunit.